The sequence spans 263 residues: Sepiapterin reductase (263 aa).

NADP(+) is bound by residues 18 to 24 (GASRGFG), 46 to 47 (RT), and 73 to 74 (DL). Substrate contacts are provided by residues 160–161 (SL) and tyrosine 173. Lysine 177 lines the NADP(+) pocket. Substrate is bound at residue glycine 202. 204 to 209 (LDTDMH) contributes to the NADP(+) binding site. Aspartate 260 provides a ligand contact to substrate.

The protein belongs to the sepiapterin reductase family. As to quaternary structure, homodimer.

Its subcellular location is the cytoplasm. The enzyme catalyses L-erythro-7,8-dihydrobiopterin + NADP(+) = L-sepiapterin + NADPH + H(+). The catalysed reaction is (6R)-L-erythro-5,6,7,8-tetrahydrobiopterin + 2 NADP(+) = 6-pyruvoyl-5,6,7,8-tetrahydropterin + 2 NADPH + 2 H(+). Catalyzes the final one or two reductions in tetra-hydrobiopterin biosynthesis to form 5,6,7,8-tetrahydrobiopterin. The polypeptide is Sepiapterin reductase (spr) (Xenopus laevis (African clawed frog)).